Reading from the N-terminus, the 131-residue chain is Small ribosomal subunit protein bS6 (131 aa).

Positions 98-131 are disordered; that stretch reads EASPMVKAKDERRERREDFANETADDSEAGDSEE. Over residues 104–116 the composition is skewed to basic and acidic residues; that stretch reads KAKDERRERREDF. Over residues 120-131 the composition is skewed to acidic residues; it reads TADDSEAGDSEE.

Belongs to the bacterial ribosomal protein bS6 family.

In terms of biological role, binds together with bS18 to 16S ribosomal RNA. The polypeptide is Small ribosomal subunit protein bS6 (Klebsiella pneumoniae (strain 342)).